The chain runs to 283 residues: Thymidylate synthase (283 aa).

A dUMP-binding site is contributed by R22. C160 functions as the Nucleophile in the catalytic mechanism. Residues 180–183 (RSCD), N191, and 221–223 (HIY) contribute to the dUMP site. Residue D183 coordinates (6R)-5,10-methylene-5,6,7,8-tetrahydrofolate. S282 is a binding site for (6R)-5,10-methylene-5,6,7,8-tetrahydrofolate.

It belongs to the thymidylate synthase family. Bacterial-type ThyA subfamily. Homodimer.

It localises to the cytoplasm. It carries out the reaction dUMP + (6R)-5,10-methylene-5,6,7,8-tetrahydrofolate = 7,8-dihydrofolate + dTMP. The protein operates within pyrimidine metabolism; dTTP biosynthesis. Functionally, catalyzes the reductive methylation of 2'-deoxyuridine-5'-monophosphate (dUMP) to 2'-deoxythymidine-5'-monophosphate (dTMP) while utilizing 5,10-methylenetetrahydrofolate (mTHF) as the methyl donor and reductant in the reaction, yielding dihydrofolate (DHF) as a by-product. This enzymatic reaction provides an intracellular de novo source of dTMP, an essential precursor for DNA biosynthesis. In Marinomonas sp. (strain MWYL1), this protein is Thymidylate synthase.